The following is a 949-amino-acid chain: Translation initiation factor IF-2 (949 aa).

3 disordered regions span residues 54-183 (FLKP…EAAP), 217-288 (LPAA…EVAL), and 305-357 (EVVA…EMQA). Composition is skewed to basic and acidic residues over residues 67 to 92 (DQEK…ERHI) and 101 to 164 (IEAK…EEAA). Composition is skewed to low complexity over residues 165–183 (RAAA…EAAP) and 217–228 (LPAAAPAAPSAP). 2 stretches are compositionally biased toward basic and acidic residues: residues 235-288 (PVEE…EVAL) and 330-339 (KYQDNEDRLQ). The region spanning 445 to 619 (TRPPVITVMG…EMLNLQSNPT (175 aa)) is the tr-type G domain. The G1 stretch occupies residues 454 to 461 (GHVDHGKT). 454 to 461 (GHVDHGKT) is a GTP binding site. A G2 region spans residues 479-483 (GITQH). Positions 501–504 (DTPG) are G3. GTP contacts are provided by residues 501–505 (DTPGH) and 555–558 (NKID). The interval 555–558 (NKID) is G4. Residues 591-593 (SAK) form a G5 region.

It belongs to the TRAFAC class translation factor GTPase superfamily. Classic translation factor GTPase family. IF-2 subfamily.

The protein localises to the cytoplasm. One of the essential components for the initiation of protein synthesis. Protects formylmethionyl-tRNA from spontaneous hydrolysis and promotes its binding to the 30S ribosomal subunits. Also involved in the hydrolysis of GTP during the formation of the 70S ribosomal complex. The protein is Translation initiation factor IF-2 of Magnetococcus marinus (strain ATCC BAA-1437 / JCM 17883 / MC-1).